Consider the following 176-residue polypeptide: NADH-dependent flavin reductase (176 aa).

Residues 39–46 (EDSVHGMT) and 48–49 (NA) contribute to the FAD site. S52 contributes to the NAD(+) binding site. FAD-binding positions include 63-65 (SIS), 69-70 (KM), and 95-96 (HF). NAD(+) contacts are provided by residues H137 and 157–160 (FYTG).

It belongs to the non-flavoprotein flavin reductase family. Homodimer. 4-nitrophenol 2-monooxygenase complex consists of an oxygenase component NphA1 and a flavin reductase component NphA2.

It carries out the reaction a reduced flavin + NAD(+) = an oxidized flavin + NADH + 2 H(+). Functionally, catalyzes the reduction of FAD with the concomitant oxidation of NADH. NAD is the physiological electron donor. Subsequently, the reduced flavins diffuse to the oxygenase component NphA2. The sequence is that of NADH-dependent flavin reductase (nphA2) from Rhodococcus sp.